We begin with the raw amino-acid sequence, 564 residues long: Dihydropyrimidinase-related protein 5 (564 aa).

A phosphothreonine mark is found at threonine 509 and threonine 514. Residues serine 532 and serine 538 each carry the phosphoserine modification. Arginine 559 bears the Omega-N-methylarginine mark.

This sequence belongs to the metallo-dependent hydrolases superfamily. Hydantoinase/dihydropyrimidinase family. Homotetramer, and heterotetramer with other DPYS-like proteins. Interacts with DPYSL2, DPYSL3 and DPYSL4. Interacts with SEPTIN4 isoform 4. Interacts with MAP2 and TUBB3. In terms of tissue distribution, detected in brain.

It localises to the cytoplasm. In terms of biological role, involved in the negative regulation of dendrite outgrowth. The polypeptide is Dihydropyrimidinase-related protein 5 (Dpysl5) (Mus musculus (Mouse)).